The primary structure comprises 390 residues: Protein arginine N-methyltransferase 1.1 (390 aa).

The span at 1 to 10 (MTKNSNHDEN) shows a compositional bias: basic and acidic residues. The disordered stretch occupies residues 1-59 (MTKNSNHDENEFISFEPNQNTKIRFEDADEDEVAEGSGVAGEETPQDESMFDAGESADT). The SAM-dependent MTase PRMT-type domain occupies 69-390 (ADYYFDSYSH…ISRTQHYKMR (322 aa)). Residues glutamate 181 and glutamate 190 contribute to the active site.

The protein belongs to the class I-like SAM-binding methyltransferase superfamily. Protein arginine N-methyltransferase family. In terms of assembly, interacts with PRMT12, MBD7 and FIB2.

Its subcellular location is the nucleus. It localises to the cytoplasm. The enzyme catalyses L-arginyl-[protein] + 2 S-adenosyl-L-methionine = N(omega),N(omega)-dimethyl-L-arginyl-[protein] + 2 S-adenosyl-L-homocysteine + 2 H(+). In terms of biological role, methylates (mono and asymmetric dimethylation) the guanidino nitrogens of arginyl residues present in a glycine and arginine-rich domain. Type I arginine methyltransferase active on both histones and non-histone proteins. Required for leaves and flowers development. Mediates the methylation of MBD7 and MED36A. This Arabidopsis thaliana (Mouse-ear cress) protein is Protein arginine N-methyltransferase 1.1 (PRMT11).